Consider the following 355-residue polypeptide: 3-isopropylmalate dehydrogenase (355 aa).

4 residues coordinate substrate: Arg90, Arg100, Arg128, and Asp222. Asp222, Asp246, and Asp250 together coordinate Mg(2+). 280–292 (GSAPDIAGKGVAN) is a binding site for NAD(+).

Belongs to the isocitrate and isopropylmalate dehydrogenases family. LeuB type 1 subfamily. In terms of assembly, homodimer. The cofactor is Mg(2+). It depends on Mn(2+) as a cofactor.

It is found in the cytoplasm. It catalyses the reaction (2R,3S)-3-isopropylmalate + NAD(+) = 4-methyl-2-oxopentanoate + CO2 + NADH. Its pathway is amino-acid biosynthesis; L-leucine biosynthesis; L-leucine from 3-methyl-2-oxobutanoate: step 3/4. Its function is as follows. Catalyzes the oxidation of 3-carboxy-2-hydroxy-4-methylpentanoate (3-isopropylmalate) to 3-carboxy-4-methyl-2-oxopentanoate. The product decarboxylates to 4-methyl-2 oxopentanoate. The protein is 3-isopropylmalate dehydrogenase of Cupriavidus pinatubonensis (strain JMP 134 / LMG 1197) (Cupriavidus necator (strain JMP 134)).